A 1793-amino-acid polypeptide reads, in one-letter code: Protein TIC 214 (1793 aa).

The next 6 helical transmembrane spans lie at 11–31 (LVSL…YYGF), 64–84 (FITG…HIAL), 90–112 (ITVI…NFLN), 129–149 (IFFQ…SSIL), 172–192 (VGWL…LVWI), and 222–242 (IFLI…PPIY). The tract at residues 1504–1524 (DIEEDYGESDSKKGGKDKNKK) is disordered.

This sequence belongs to the TIC214 family. As to quaternary structure, part of the Tic complex.

The protein resides in the plastid. It is found in the chloroplast inner membrane. Functionally, involved in protein precursor import into chloroplasts. May be part of an intermediate translocation complex acting as a protein-conducting channel at the inner envelope. This Lotus japonicus (Lotus corniculatus var. japonicus) protein is Protein TIC 214.